The sequence spans 464 residues: Formin-like protein 19 (464 aa).

Positions 1–74 are disordered; the sequence is MSLVDISGAY…PRPCSRPPKT (74 aa). Positions 14 to 70 are enriched in pro residues; sequence PLPPPPPPLMRRRAPLPPPPPPPLMRRRAPPPPPPPLMRRRAPPPPPPPPLPRPCSR. The 395-residue stretch at 68–462 folds into the FH2 domain; it reads CSRPPKTKCS…KAAKEAEMEK (395 aa).

This sequence belongs to the formin-like family. Class-II subfamily.

This chain is Formin-like protein 19 (FH19), found in Arabidopsis thaliana (Mouse-ear cress).